The primary structure comprises 231 residues: Cytidylate kinase (231 aa).

18 to 26 (GPSGTGKSS) is an ATP binding site.

Belongs to the cytidylate kinase family. Type 1 subfamily.

It localises to the cytoplasm. It carries out the reaction CMP + ATP = CDP + ADP. The catalysed reaction is dCMP + ATP = dCDP + ADP. This is Cytidylate kinase from Streptomyces griseus subsp. griseus (strain JCM 4626 / CBS 651.72 / NBRC 13350 / KCC S-0626 / ISP 5235).